The sequence spans 280 residues: Alpha-methyl-mannoside-specific lectin (280 aa).

The signal sequence occupies residues 1–26 (MAISKKILPLLSIATIFLLLLNKAHS). Residues Asp-114 and Gly-134 each coordinate a carbohydrate. Glu-156 and Asp-158 together coordinate Mn(2+). Positions 158 and 160 each coordinate Ca(2+). Positions 165 and 166 each coordinate a carbohydrate. Positions 166 and 169 each coordinate Ca(2+). The Mn(2+) site is built by Asp-169 and His-174. Positions 248 and 250 each coordinate a carbohydrate.

It belongs to the leguminous lectin family. As to quaternary structure, homodimer. In terms of processing, glycosylated.

Alpha-methyl-D-mannoside-specific lectin. Has hemagglutinating activity towards rabbit erythrocytes. Binds to cytokinins and significantly inhibits physiological effects of cytokinin activity such as cotyledon expansion and delayed leaf senescence. In Arachis hypogaea (Peanut), this protein is Alpha-methyl-mannoside-specific lectin.